A 67-amino-acid chain; its full sequence is Probable archaeal histone 3 (67 aa).

2 interaction with DNA regions span residues 20–22 (RVS) and 54–57 (KTVK).

It belongs to the archaeal histone HMF family. In terms of assembly, homodimer or heterodimer with another histone. Dimers then assemble into higher oligomers, with the DNA wrapped around the protein core.

Its subcellular location is the cytoplasm. The protein localises to the chromosome. In terms of biological role, binds and compact DNA (95 to 150 base pairs) to form nucleosome-like structures that contain positive DNA supercoils. Increases the resistance of DNA to thermal denaturation (in vitro). This Methanocaldococcus jannaschii (strain ATCC 43067 / DSM 2661 / JAL-1 / JCM 10045 / NBRC 100440) (Methanococcus jannaschii) protein is Probable archaeal histone 3.